The chain runs to 378 residues: Histone deacetylase 8 (378 aa).

Residues 15 to 325 are histone deacetylase; it reads RSVVYVYSPE…WTYLTGTVLG (311 aa). Residue Asp102 participates in substrate binding. His144 functions as the Proton acceptor in the catalytic mechanism. Gly152 contributes to the substrate binding site. Positions 179, 181, and 268 each coordinate a divalent metal cation. Tyr307 is a binding site for substrate.

The protein belongs to the histone deacetylase family. HD type 1 subfamily. A divalent metal cation is required as a cofactor.

The protein resides in the nucleus. It is found in the chromosome. Its subcellular location is the cytoplasm. The enzyme catalyses N(6)-acetyl-L-lysyl-[histone] + H2O = L-lysyl-[histone] + acetate. The catalysed reaction is N(6)-acetyl-L-lysyl-[protein] + H2O = L-lysyl-[protein] + acetate. It carries out the reaction N(6)-(2E)-butenoyl-L-lysyl-[protein] + H2O = (2E)-2-butenoate + L-lysyl-[protein]. Its activity is inhibited by trichostatin A (TSA) and butyrate, 2 well known histone deacetylase inhibitors. Functionally, histone deacetylase that catalyzes the deacetylation of lysine residues on the N-terminal part of the core histones (H2A, H2B, H3 and H4). Histone deacetylation gives a tag for epigenetic repression and plays an important role in transcriptional regulation, cell cycle progression and developmental events. Histone deacetylases act via the formation of large multiprotein complexes. Also involved in the deacetylation of non-histone proteins. In addition to protein deacetylase activity, also has protein-lysine deacylase activity: acts as a protein decrotonylase by mediating decrotonylation ((2E)-butenoyl) of histones. This is Histone deacetylase 8 (hdac8) from Danio rerio (Zebrafish).